The sequence spans 211 residues: LexA repressor (211 aa).

A DNA-binding region (H-T-H motif) is located at residues 27-47 (QTEIARAFGFKGVRAVQHHLD). Active-site for autocatalytic cleavage activity residues include Ser-131 and Lys-168.

It belongs to the peptidase S24 family. In terms of assembly, homodimer.

The enzyme catalyses Hydrolysis of Ala-|-Gly bond in repressor LexA.. Functionally, represses a number of genes involved in the response to DNA damage (SOS response), including recA and lexA. In the presence of single-stranded DNA, RecA interacts with LexA causing an autocatalytic cleavage which disrupts the DNA-binding part of LexA, leading to derepression of the SOS regulon and eventually DNA repair. This Xylella fastidiosa (strain M23) protein is LexA repressor.